A 113-amino-acid chain; its full sequence is MLNLIQTLRMEATQKSRHKKTQIQSGDILSITTTQYKNKKRKQNLKGICIGIKKRIGYTTIQLRNFIGGVSQEQSFILESPIINNIEIIGKIKGNTKAKKYYLRTKSPSENKV.

Belongs to the bacterial ribosomal protein bL19 family.

It localises to the mitochondrion. This Reclinomonas americana protein is Large ribosomal subunit protein bL19m (RPL19).